The primary structure comprises 259 residues: Proteasome assembly chaperone 2 (259 aa).

Belongs to the PSMG2 family. Forms a heterodimer with psmg1. Post-translationally, degraded by the proteasome upon completion of 20S proteasome maturation.

Its subcellular location is the nucleus. Chaperone protein which promotes assembly of the 20S proteasome as part of a heterodimer with psmg1. The protein is Proteasome assembly chaperone 2 of Xenopus laevis (African clawed frog).